The chain runs to 292 residues: Acetylglutamate kinase (292 aa).

Substrate-binding positions include 64–65 (GG), R86, and N190.

The protein belongs to the acetylglutamate kinase family. ArgB subfamily.

It localises to the cytoplasm. It carries out the reaction N-acetyl-L-glutamate + ATP = N-acetyl-L-glutamyl 5-phosphate + ADP. It participates in amino-acid biosynthesis; L-arginine biosynthesis; N(2)-acetyl-L-ornithine from L-glutamate: step 2/4. Its function is as follows. Catalyzes the ATP-dependent phosphorylation of N-acetyl-L-glutamate. The polypeptide is Acetylglutamate kinase (Leptospira biflexa serovar Patoc (strain Patoc 1 / Ames)).